The sequence spans 561 residues: Endoplasmic reticulum oxidoreductin-1 (561 aa).

Positions 1–18 (MVKVLQLCFLSAISLVQA) are cleaved as a signal peptide. Asn-20 and Asn-39 each carry an N-linked (GlcNAc...) asparagine glycan. Disulfide bonds link Cys-95–Cys-349, Cys-105–Cys-110, Cys-145–Cys-166, Cys-152–Cys-295, and Cys-352–Cys-355. The N-linked (GlcNAc...) asparagine glycan is linked to Asn-135. Residues Arg-187, Thr-189, Trp-200, Ser-228, His-231, and Arg-260 each contribute to the FAD site. An N-linked (GlcNAc...) asparagine glycan is attached at Asn-342. The active-site Nucleophile is Cys-352. Cys-355 is an active-site residue. N-linked (GlcNAc...) asparagine glycosylation occurs at Asn-452.

It belongs to the EROs family. As to quaternary structure, may function both as a monomer and a homodimer. The cofactor is FAD.

The protein resides in the endoplasmic reticulum membrane. Its function is as follows. Essential oxidoreductase that oxidizes proteins in the endoplasmic reticulum to produce disulfide bonds. Acts by oxidizing directly PDI1 isomerase through a direct disulfide exchange. Does not act as a direct oxidant of folding substrate, but relies on PDI1 to transfer oxidizing equivalent. Does not oxidize all pdi related proteins, suggesting that it can discriminate between PDI1 and related proteins. Its reoxidation probably involves electron transfer to molecular oxygen via FAD. Acts independently of glutathione. May be responsible for a significant proportion of reactive oxygen species (ROS) in the cell, thereby being a source of oxidative stress. The polypeptide is Endoplasmic reticulum oxidoreductin-1 (ERO1) (Kluyveromyces lactis (strain ATCC 8585 / CBS 2359 / DSM 70799 / NBRC 1267 / NRRL Y-1140 / WM37) (Yeast)).